A 106-amino-acid polypeptide reads, in one-letter code: UPF0145 protein MA_3383 (106 aa).

It belongs to the UPF0145 family.

In Methanosarcina acetivorans (strain ATCC 35395 / DSM 2834 / JCM 12185 / C2A), this protein is UPF0145 protein MA_3383.